Here is a 365-residue protein sequence, read N- to C-terminus: UDP-N-acetylglucosamine--N-acetylmuramyl-(pentapeptide) pyrophosphoryl-undecaprenol N-acetylglucosamine transferase (365 aa).

Residues 13 to 15, Asn125, Arg165, Ser192, and Gln293 each bind UDP-N-acetyl-alpha-D-glucosamine; that span reads TGG.

Belongs to the glycosyltransferase 28 family. MurG subfamily.

It localises to the cell inner membrane. The enzyme catalyses di-trans,octa-cis-undecaprenyl diphospho-N-acetyl-alpha-D-muramoyl-L-alanyl-D-glutamyl-meso-2,6-diaminopimeloyl-D-alanyl-D-alanine + UDP-N-acetyl-alpha-D-glucosamine = di-trans,octa-cis-undecaprenyl diphospho-[N-acetyl-alpha-D-glucosaminyl-(1-&gt;4)]-N-acetyl-alpha-D-muramoyl-L-alanyl-D-glutamyl-meso-2,6-diaminopimeloyl-D-alanyl-D-alanine + UDP + H(+). Its pathway is cell wall biogenesis; peptidoglycan biosynthesis. Its function is as follows. Cell wall formation. Catalyzes the transfer of a GlcNAc subunit on undecaprenyl-pyrophosphoryl-MurNAc-pentapeptide (lipid intermediate I) to form undecaprenyl-pyrophosphoryl-MurNAc-(pentapeptide)GlcNAc (lipid intermediate II). The sequence is that of UDP-N-acetylglucosamine--N-acetylmuramyl-(pentapeptide) pyrophosphoryl-undecaprenol N-acetylglucosamine transferase from Ruegeria sp. (strain TM1040) (Silicibacter sp.).